The primary structure comprises 299 residues: ATP phosphoribosyltransferase (299 aa).

It belongs to the ATP phosphoribosyltransferase family. Long subfamily. Mg(2+) serves as cofactor.

Its subcellular location is the cytoplasm. It catalyses the reaction 1-(5-phospho-beta-D-ribosyl)-ATP + diphosphate = 5-phospho-alpha-D-ribose 1-diphosphate + ATP. The protein operates within amino-acid biosynthesis; L-histidine biosynthesis; L-histidine from 5-phospho-alpha-D-ribose 1-diphosphate: step 1/9. Its activity is regulated as follows. Feedback inhibited by histidine. Functionally, catalyzes the condensation of ATP and 5-phosphoribose 1-diphosphate to form N'-(5'-phosphoribosyl)-ATP (PR-ATP). Has a crucial role in the pathway because the rate of histidine biosynthesis seems to be controlled primarily by regulation of HisG enzymatic activity. In Shewanella loihica (strain ATCC BAA-1088 / PV-4), this protein is ATP phosphoribosyltransferase.